Reading from the N-terminus, the 140-residue chain is Lymphocyte antigen 6 complex locus protein G5c (140 aa).

A signal peptide spans 1–41; the sequence is MRFMAGPAGSQNPGPMCFHSSLQALYTVLLIVLVMMSLVFG. The UPAR/Ly6 domain maps to 60 to 140; that stretch reads LRCYRCLLET…SQCCFLGFLQ (81 aa). Disulfide bonds link C62–C89, C65–C74, C81–C107, and C116–C133. N-linked (GlcNAc...) asparagine glycosylation is present at N96.

In terms of assembly, forms oligomers. N-glycosylated.

The protein resides in the secreted. In terms of biological role, may have a role in hematopoietic cell differentiation. The protein is Lymphocyte antigen 6 complex locus protein G5c (LY6G5C) of Macaca mulatta (Rhesus macaque).